A 93-amino-acid polypeptide reads, in one-letter code: Cobalt transport protein CbiN (93 aa).

A run of 2 helical transmembrane segments spans residues 5 to 25 (LMLL…NHGG) and 63 to 83 (LLFT…LGYC).

The protein belongs to the CbiN family. In terms of assembly, forms an energy-coupling factor (ECF) transporter complex composed of an ATP-binding protein (A component, CbiO), a transmembrane protein (T component, CbiQ) and 2 possible substrate-capture proteins (S components, CbiM and CbiN) of unknown stoichimetry.

The protein resides in the cell inner membrane. It functions in the pathway cofactor biosynthesis; adenosylcobalamin biosynthesis. Part of the energy-coupling factor (ECF) transporter complex CbiMNOQ involved in cobalt import. In Salmonella newport (strain SL254), this protein is Cobalt transport protein CbiN.